The following is a 214-amino-acid chain: Guanylate kinase (214 aa).

Positions 6–192 (GTLYIISAPS…ALEDLKSIFR (187 aa)) constitute a Guanylate kinase-like domain. 13-20 (APSGAGKT) is an ATP binding site.

It belongs to the guanylate kinase family.

The protein localises to the cytoplasm. The enzyme catalyses GMP + ATP = GDP + ADP. In terms of biological role, essential for recycling GMP and indirectly, cGMP. The chain is Guanylate kinase from Pseudomonas syringae pv. tomato (strain ATCC BAA-871 / DC3000).